The primary structure comprises 318 residues: Pantothenate kinase (318 aa).

Residue 96–103 coordinates ATP; the sequence is GSVAVGKS.

This sequence belongs to the prokaryotic pantothenate kinase family.

Its subcellular location is the cytoplasm. The catalysed reaction is (R)-pantothenate + ATP = (R)-4'-phosphopantothenate + ADP + H(+). The protein operates within cofactor biosynthesis; coenzyme A biosynthesis; CoA from (R)-pantothenate: step 1/5. The polypeptide is Pantothenate kinase (Rhodopseudomonas palustris (strain HaA2)).